The primary structure comprises 674 residues: Amino-acid acetyltransferase, mitochondrial (674 aa).

The N-terminal 50 residues, 1–50 (MPLVAAMLTRSNGAWKKATSVVQASICRDQQRPNHTTITSVTSVSQRRHF), are a transit peptide targeting the mitochondrion. Polar residues predominate over residues 33–45 (PNHTTITSVTSVS). The segment at 33 to 74 (PNHTTITSVTSVSQRRHFSSAENGAKPSRSHPSAAEAKQKRE) is disordered. An N-acetyltransferase domain is found at 497 to 665 (GTPRLKLTDT…YEDVCRGVVP (169 aa)).

Belongs to the acetyltransferase family.

Its subcellular location is the mitochondrion. The catalysed reaction is L-glutamate + acetyl-CoA = N-acetyl-L-glutamate + CoA + H(+). It participates in amino-acid biosynthesis; L-arginine biosynthesis; N(2)-acetyl-L-ornithine from L-glutamate: step 1/4. In terms of biological role, N-acetylglutamate synthase involved in arginine biosynthesis. In Podospora anserina (strain S / ATCC MYA-4624 / DSM 980 / FGSC 10383) (Pleurage anserina), this protein is Amino-acid acetyltransferase, mitochondrial (ARG2).